The following is a 360-amino-acid chain: Probable ribonucleoside-diphosphate reductase small subunit 376L (360 aa).

D67, E98, and H101 together coordinate Fe cation. Residue Y105 is part of the active site. 3 residues coordinate Fe cation: E172, E206, and H209.

It belongs to the ribonucleoside diphosphate reductase small chain family. In terms of assembly, heterotetramer composed of a homodimer of the large subunit (R1) and a homodimer of the small subunit (R2). Larger multisubunit protein complex are also active, composed of (R1)n(R2)n. The cofactor is Fe cation.

It catalyses the reaction a 2'-deoxyribonucleoside 5'-diphosphate + [thioredoxin]-disulfide + H2O = a ribonucleoside 5'-diphosphate + [thioredoxin]-dithiol. Functionally, ribonucleoside-diphosphate reductase holoenzyme provides the precursors necessary for viral DNA synthesis. Allows virus growth in non-dividing cells. Catalyzes the biosynthesis of deoxyribonucleotides from the corresponding ribonucleotides. This is Probable ribonucleoside-diphosphate reductase small subunit 376L from Acheta domesticus (House cricket).